Here is a 129-residue protein sequence, read N- to C-terminus: MSYKFPDNLNYADTHEYVLEENGLLKIGVSEFAIDQLGDIVFVELADEGATLEKGETFGTIESVKAVEEVYLPFSGEIVSVNESVIENPELLQNDPIGEGWLVILKPESKASIADLMTSEEYQSKVVPK.

The Lipoyl-binding domain maps to L24 to K106. An N6-lipoyllysine modification is found at K65.

This sequence belongs to the GcvH family. The glycine cleavage system is composed of four proteins: P, T, L and H. Requires (R)-lipoate as cofactor.

The glycine cleavage system catalyzes the degradation of glycine. The H protein shuttles the methylamine group of glycine from the P protein to the T protein. In Prochlorococcus marinus (strain AS9601), this protein is Glycine cleavage system H protein.